The following is a 171-amino-acid chain: Lipoprotein signal peptidase (171 aa).

3 consecutive transmembrane segments (helical) span residues 7–27 (GLIALLATLALDQASKLWLYF), 64–84 (LGRWLLVAVSLAAVIGLSVWM), and 88–108 (GSRLLAVALGLIVGGALGNAI). Active-site residues include Asp118 and Asp136. Residues 128–148 (SWYVFNVADAAIVAGVVGLIL) traverse the membrane as a helical segment.

This sequence belongs to the peptidase A8 family.

Its subcellular location is the cell inner membrane. It catalyses the reaction Release of signal peptides from bacterial membrane prolipoproteins. Hydrolyzes -Xaa-Yaa-Zaa-|-(S,diacylglyceryl)Cys-, in which Xaa is hydrophobic (preferably Leu), and Yaa (Ala or Ser) and Zaa (Gly or Ala) have small, neutral side chains.. Its pathway is protein modification; lipoprotein biosynthesis (signal peptide cleavage). Functionally, this protein specifically catalyzes the removal of signal peptides from prolipoproteins. The sequence is that of Lipoprotein signal peptidase from Methylorubrum extorquens (strain PA1) (Methylobacterium extorquens).